We begin with the raw amino-acid sequence, 337 residues long: G-protein coupled receptor 65 (337 aa).

Residues 1–5 lie on the Extracellular side of the membrane; sequence MNSTC. An N-linked (GlcNAc...) asparagine glycan is attached at Asn2. 2 disulfides stabilise this stretch: Cys5/Cys160 and Cys87/Cys170. Residues 6–42 form a helical membrane-spanning segment; it reads IEEQHDLDHYLFPIVYIFVIIVSIPANIGSLCVSFLQ. At 43–46 the chain is on the cytoplasmic side; that stretch reads AKKE. Residues 47–77 traverse the membrane as a helical segment; the sequence is SELGIYLFSLSLSDLLYALTLPLWIDYTWNK. At 78-82 the chain is on the extracellular side; it reads DNWTF. The N-linked (GlcNAc...) asparagine glycan is linked to Asn79. Residues 83 to 118 traverse the membrane as a helical segment; that stretch reads SPALCKGSAFLMYMNFYSSTAFLTCIAVDRYLAVVY. The Cytoplasmic portion of the chain corresponds to 119–126; that stretch reads PLKFFFLR. A helical transmembrane segment spans residues 127-153; sequence TRRFALMVSLSIWILETIFNAVMLWED. Over 154–174 the chain is Extracellular; sequence ETVVEYCDAEKSNFTLCYDKY. An extracellular loop 2 (ECL2) region spans residues 154-174; sequence ETVVEYCDAEKSNFTLCYDKY. The N-linked (GlcNAc...) asparagine glycan is linked to Asn166. Residues 175–212 traverse the membrane as a helical segment; it reads PLEKWQINLNLFRTCTGYAIPLVTILICNRKVYQAVRH. The Cytoplasmic portion of the chain corresponds to 213–216; that stretch reads NKAT. A helical transmembrane segment spans residues 217-252; that stretch reads ENKEKKRIIKLLVSITVTFVLCFTPFHVMLLIRCIL. The Extracellular segment spans residues 253 to 264; it reads EHAVNFEDHSNS. The helical transmembrane segment at 265-293 threads the bilayer; sequence GKRTYTMYRITVALTSLNCVADPILYCFV. Residues 294–337 are Cytoplasmic-facing; that stretch reads TETGRYDMWNILKFCTGRCNTSQRQRKRILSVSTKDTMELEVLE.

This sequence belongs to the G-protein coupled receptor 1 family. Predominantly expressed in thymus, spleen, lymph nodes, small intestine, lung, placenta and peripheral blood leukocytes.

The protein localises to the cell membrane. It is found in the early endosome membrane. It localises to the late endosome membrane. With respect to regulation, activated by a network of residues that connects an extracellular-facing cavity to Glu-142, a conserved charged residue buried in the transmembrane core of the receptor. Protonation likely drives conformational changes in extracellular loop 2 (ECL2), which stabilizes movement of transmembrane 3 (TM3) and a series of rearrangements that connect the extracellular-facing cavity to Glu-142, a residue only conserved in proton-sensing G-protein coupled receptors. Activated by BTB09089, a positive allosteric modulator. Proton-sensing G-protein coupled receptor activated by extracellular pH, which is required to monitor pH changes and generate adaptive reactions. Activated by an optimal pH of 7.4. Ligand binding causes a conformation change that triggers signaling via guanine nucleotide-binding proteins (G proteins) and modulates the activity of downstream effectors, such as adenylate cyclase. GPR65 is mainly coupled to G(s) G proteins and mediates activation of adenylate cyclase activity. May also act as a receptor for the glycosphingolipid psychosine (PSY) and several related glycosphingolipids. Plays a role in immune response by maintaining lysosome function and regulating T-cell metabolism. Acts as a regulator of inflammation by mediating pH-sensing of extracellular acidification which takes place in inflamed tissues: activation regulates endo-lysosomal function of immune cells and T-cell metabolism. Constitutively active in endosomes and stimulates adenylate cyclase production from endosomes independently from extracellular pH changes. This Homo sapiens (Human) protein is G-protein coupled receptor 65.